The primary structure comprises 292 residues: 4-hydroxy-tetrahydrodipicolinate synthase 2 (292 aa).

Threonine 46 serves as a coordination point for pyruvate. The active-site Proton donor/acceptor is the tyrosine 134. Residue lysine 162 is the Schiff-base intermediate with substrate of the active site. Pyruvate is bound at residue valine 204.

This sequence belongs to the DapA family. In terms of assembly, homotetramer; dimer of dimers.

The protein resides in the cytoplasm. The catalysed reaction is L-aspartate 4-semialdehyde + pyruvate = (2S,4S)-4-hydroxy-2,3,4,5-tetrahydrodipicolinate + H2O + H(+). The protein operates within amino-acid biosynthesis; L-lysine biosynthesis via DAP pathway; (S)-tetrahydrodipicolinate from L-aspartate: step 3/4. Functionally, catalyzes the condensation of (S)-aspartate-beta-semialdehyde [(S)-ASA] and pyruvate to 4-hydroxy-tetrahydrodipicolinate (HTPA). This is 4-hydroxy-tetrahydrodipicolinate synthase 2 from Halalkalibacterium halodurans (strain ATCC BAA-125 / DSM 18197 / FERM 7344 / JCM 9153 / C-125) (Bacillus halodurans).